We begin with the raw amino-acid sequence, 167 residues long: Transcriptional regulator MraZ (167 aa).

SpoVT-AbrB domains lie at 8-51 and 92-135; these read ESNH…YGDH and SFPT…NPAT.

Belongs to the MraZ family. Forms oligomers.

The protein localises to the cytoplasm. It is found in the nucleoid. This Ruegeria pomeroyi (strain ATCC 700808 / DSM 15171 / DSS-3) (Silicibacter pomeroyi) protein is Transcriptional regulator MraZ.